The sequence spans 402 residues: Serine/threonine transporter SstT (402 aa).

The next 9 helical transmembrane spans lie at Ile-19 to Leu-39, Leu-43 to Ala-63, Thr-86 to Leu-106, Ala-138 to Met-158, Val-179 to Ile-199, Leu-212 to Ile-232, Ile-287 to Leu-307, Val-327 to Ile-347, and Phe-354 to Ile-374.

The protein belongs to the dicarboxylate/amino acid:cation symporter (DAACS) (TC 2.A.23) family.

Its subcellular location is the cell membrane. The catalysed reaction is L-serine(in) + Na(+)(in) = L-serine(out) + Na(+)(out). It catalyses the reaction L-threonine(in) + Na(+)(in) = L-threonine(out) + Na(+)(out). Its function is as follows. Involved in the import of serine and threonine into the cell, with the concomitant import of sodium (symport system). The polypeptide is Serine/threonine transporter SstT (Streptococcus agalactiae serotype Ia (strain ATCC 27591 / A909 / CDC SS700)).